The primary structure comprises 310 residues: 4-hydroxyproline 2-epimerase (310 aa).

Cys88 acts as the Proton acceptor in catalysis. Substrate contacts are provided by residues Gly89–His90, His208, and Asp232. Cys236 serves as the catalytic Proton donor. Position 237 to 238 (Gly237 to Thr238) interacts with substrate.

Belongs to the proline racemase family.

It carries out the reaction trans-4-hydroxy-L-proline = cis-4-hydroxy-D-proline. Its function is as follows. Catalyzes the epimerization of trans-4-hydroxy-L-proline (t4LHyp) to cis-4-hydroxy-D-proline (c4DHyp). Is likely involved in a degradation pathway that converts t4LHyp to alpha-ketoglutarate. Displays no proline racemase activity. This Acinetobacter baumannii (strain ATCC 17978 / DSM 105126 / CIP 53.77 / LMG 1025 / NCDC KC755 / 5377) protein is 4-hydroxyproline 2-epimerase.